The following is a 117-amino-acid chain: Immunoglobulin kappa variable 1D-16 (117 aa).

Positions 1-22 are cleaved as a signal peptide; the sequence is MDMRVLAQLLGLLLLCFPGARC. Residues 23 to 45 are framework-1; it reads DIQMTQSPSSLSASVGDRVTITC. An Ig-like domain is found at 24–117; sequence IQMTQSPSSL…YYCQQYNSYP (94 aa). An intrachain disulfide couples Cys45 to Cys110. The tract at residues 46–56 is complementarity-determining-1; the sequence is RASQGISSWLA. Residues 57-71 form a framework-2 region; the sequence is WYQQKPEKAPKSLIY. The complementarity-determining-2 stretch occupies residues 72–78; sequence AASSLQS. Residues 79–110 form a framework-3 region; that stretch reads GVPSRFSGSGSGTDFTLTISSLQPEDFATYYC. Residues 111–117 are complementarity-determining-3; sequence QQYNSYP.

In terms of assembly, immunoglobulins are composed of two identical heavy chains and two identical light chains; disulfide-linked.

The protein resides in the secreted. It localises to the cell membrane. Functionally, v region of the variable domain of immunoglobulin light chains that participates in the antigen recognition. Immunoglobulins, also known as antibodies, are membrane-bound or secreted glycoproteins produced by B lymphocytes. In the recognition phase of humoral immunity, the membrane-bound immunoglobulins serve as receptors which, upon binding of a specific antigen, trigger the clonal expansion and differentiation of B lymphocytes into immunoglobulins-secreting plasma cells. Secreted immunoglobulins mediate the effector phase of humoral immunity, which results in the elimination of bound antigens. The antigen binding site is formed by the variable domain of one heavy chain, together with that of its associated light chain. Thus, each immunoglobulin has two antigen binding sites with remarkable affinity for a particular antigen. The variable domains are assembled by a process called V-(D)-J rearrangement and can then be subjected to somatic hypermutations which, after exposure to antigen and selection, allow affinity maturation for a particular antigen. This chain is Immunoglobulin kappa variable 1D-16, found in Homo sapiens (Human).